The following is a 313-amino-acid chain: Homoserine O-succinyltransferase (313 aa).

The active-site Acyl-thioester intermediate is Cys142. 2 residues coordinate substrate: Lys163 and Ser192. His235 acts as the Proton acceptor in catalysis. The active site involves Glu237. A substrate-binding site is contributed by Arg249.

It belongs to the MetA family.

The protein resides in the cytoplasm. It catalyses the reaction L-homoserine + succinyl-CoA = O-succinyl-L-homoserine + CoA. The protein operates within amino-acid biosynthesis; L-methionine biosynthesis via de novo pathway; O-succinyl-L-homoserine from L-homoserine: step 1/1. Functionally, transfers a succinyl group from succinyl-CoA to L-homoserine, forming succinyl-L-homoserine. The protein is Homoserine O-succinyltransferase of Shewanella baltica (strain OS195).